The chain runs to 260 residues: Triosephosphate isomerase (260 aa).

11–13 (NWK) serves as a coordination point for substrate. Histidine 103 (electrophile) is an active-site residue. Catalysis depends on glutamate 175, which acts as the Proton acceptor. Substrate is bound by residues glycine 181, serine 220, and 241–242 (GG).

It belongs to the triosephosphate isomerase family. Homodimer.

The protein resides in the cytoplasm. It catalyses the reaction D-glyceraldehyde 3-phosphate = dihydroxyacetone phosphate. Its pathway is carbohydrate biosynthesis; gluconeogenesis. The protein operates within carbohydrate degradation; glycolysis; D-glyceraldehyde 3-phosphate from glycerone phosphate: step 1/1. In terms of biological role, involved in the gluconeogenesis. Catalyzes stereospecifically the conversion of dihydroxyacetone phosphate (DHAP) to D-glyceraldehyde-3-phosphate (G3P). This chain is Triosephosphate isomerase, found in Shewanella amazonensis (strain ATCC BAA-1098 / SB2B).